The chain runs to 281 residues: Energy-coupling factor transporter ATP-binding protein EcfA1 (281 aa).

An ABC transporter domain is found at 6–242 (IDVKHLDYRY…GEALIKMGLD (237 aa)). An ATP-binding site is contributed by 42-49 (GHNGSGKS).

The protein belongs to the ABC transporter superfamily. Energy-coupling factor EcfA family. Forms a stable energy-coupling factor (ECF) transporter complex composed of 2 membrane-embedded substrate-binding proteins (S component), 2 ATP-binding proteins (A component) and 2 transmembrane proteins (T component).

It localises to the cell membrane. In terms of biological role, ATP-binding (A) component of a common energy-coupling factor (ECF) ABC-transporter complex. Unlike classic ABC transporters this ECF transporter provides the energy necessary to transport a number of different substrates. The protein is Energy-coupling factor transporter ATP-binding protein EcfA1 of Lactiplantibacillus plantarum (strain ATCC BAA-793 / NCIMB 8826 / WCFS1) (Lactobacillus plantarum).